The chain runs to 175 residues: UPF0398 protein SUB1405 (175 aa).

This sequence belongs to the UPF0398 family.

This is UPF0398 protein SUB1405 from Streptococcus uberis (strain ATCC BAA-854 / 0140J).